A 242-amino-acid polypeptide reads, in one-letter code: Phosphatidylethanolamine-binding protein 4 (242 aa).

The first 26 residues, 1-26 (MTMKLVAAALCLSLLAAGLWVGLSLT), serve as a signal peptide directing secretion. The disordered stretch occupies residues 31-50 (EEGKPGGEKPGGGKPGGSGR). Positions 38 to 50 (EKPGGGKPGGSGR) are enriched in gly residues. Asparagine 77 and asparagine 139 each carry an N-linked (GlcNAc...) asparagine glycan. The segment at 210 to 242 (DPDTSTQFMTQFDEELSSEFGRINDDQEQFNQK) is important for secretion.

Belongs to the phosphatidylethanolamine-binding protein family.

The protein resides in the secreted. Its function is as follows. Promotes AKT phosphorylation, suggesting a possible role in the PI3K-AKT signaling pathway. This is Phosphatidylethanolamine-binding protein 4 (Pebp4) from Mus musculus (Mouse).